Reading from the N-terminus, the 466-residue chain is Exodeoxyribonuclease 7 large subunit (466 aa).

It belongs to the XseA family. In terms of assembly, heterooligomer composed of large and small subunits.

It is found in the cytoplasm. It catalyses the reaction Exonucleolytic cleavage in either 5'- to 3'- or 3'- to 5'-direction to yield nucleoside 5'-phosphates.. In terms of biological role, bidirectionally degrades single-stranded DNA into large acid-insoluble oligonucleotides, which are then degraded further into small acid-soluble oligonucleotides. The chain is Exodeoxyribonuclease 7 large subunit from Vesicomyosocius okutanii subsp. Calyptogena okutanii (strain HA).